Here is a 248-residue protein sequence, read N- to C-terminus: Adenosylcobinamide-GDP ribazoletransferase (248 aa).

Transmembrane regions (helical) follow at residues 36 to 56, 59 to 79, 114 to 134, 137 to 157, 170 to 190, and 199 to 219; these read FFLP…YLGL, FLPA…ITGG, GTIA…SLVL, YSIA…FLCL, IFIG…VLVL, and ATII…LLCL.

This sequence belongs to the CobS family. Requires Mg(2+) as cofactor.

The protein localises to the cell membrane. The enzyme catalyses alpha-ribazole + adenosylcob(III)inamide-GDP = adenosylcob(III)alamin + GMP + H(+). It catalyses the reaction alpha-ribazole 5'-phosphate + adenosylcob(III)inamide-GDP = adenosylcob(III)alamin 5'-phosphate + GMP + H(+). Its pathway is cofactor biosynthesis; adenosylcobalamin biosynthesis; adenosylcobalamin from cob(II)yrinate a,c-diamide: step 7/7. Joins adenosylcobinamide-GDP and alpha-ribazole to generate adenosylcobalamin (Ado-cobalamin). Also synthesizes adenosylcobalamin 5'-phosphate from adenosylcobinamide-GDP and alpha-ribazole 5'-phosphate. The chain is Adenosylcobinamide-GDP ribazoletransferase from Clostridium botulinum (strain Langeland / NCTC 10281 / Type F).